The primary structure comprises 171 residues: NADH-quinone oxidoreductase subunit B (171 aa).

[4Fe-4S] cluster-binding residues include Cys-39, Cys-40, Cys-105, and Cys-134.

Belongs to the complex I 20 kDa subunit family. In terms of assembly, NDH-1 is composed of 14 different subunits. Subunits NuoB, C, D, E, F, and G constitute the peripheral sector of the complex. Requires [4Fe-4S] cluster as cofactor.

The protein localises to the cell inner membrane. It carries out the reaction a quinone + NADH + 5 H(+)(in) = a quinol + NAD(+) + 4 H(+)(out). In terms of biological role, NDH-1 shuttles electrons from NADH, via FMN and iron-sulfur (Fe-S) centers, to quinones in the respiratory chain. The immediate electron acceptor for the enzyme in this species is believed to be ubiquinone. Couples the redox reaction to proton translocation (for every two electrons transferred, four hydrogen ions are translocated across the cytoplasmic membrane), and thus conserves the redox energy in a proton gradient. This chain is NADH-quinone oxidoreductase subunit B, found in Aliarcobacter butzleri (strain RM4018) (Arcobacter butzleri).